The sequence spans 352 residues: Anthranilate phosphoribosyltransferase (352 aa).

Residues G96, 99 to 100 (GS), S104, 106 to 109 (NIST), 124 to 132 (KHGNRSVSS), and S136 each bind 5-phospho-alpha-D-ribose 1-diphosphate. G96 lines the anthranilate pocket. S108 lines the Mg(2+) pocket. N127 is a binding site for anthranilate. Anthranilate is bound at residue R182. Positions 241 and 242 each coordinate Mg(2+).

This sequence belongs to the anthranilate phosphoribosyltransferase family. Homodimer. It depends on Mg(2+) as a cofactor.

The enzyme catalyses N-(5-phospho-beta-D-ribosyl)anthranilate + diphosphate = 5-phospho-alpha-D-ribose 1-diphosphate + anthranilate. It functions in the pathway amino-acid biosynthesis; L-tryptophan biosynthesis; L-tryptophan from chorismate: step 2/5. Functionally, catalyzes the transfer of the phosphoribosyl group of 5-phosphorylribose-1-pyrophosphate (PRPP) to anthranilate to yield N-(5'-phosphoribosyl)-anthranilate (PRA). This chain is Anthranilate phosphoribosyltransferase, found in Syntrophotalea carbinolica (strain DSM 2380 / NBRC 103641 / GraBd1) (Pelobacter carbinolicus).